The primary structure comprises 301 residues: Protein p34 (301 aa).

5 helical membrane-spanning segments follow: residues 15-35 (YLSVTTALIILSIKLYAWVVT), 40-60 (ILAALIDSMLDITSSFINLIA), 83-103 (TIFSQSIFFFASAFFVGFSSV), 120-140 (TVMYVCIFLTIILVFYQTYVI), and 171-191 (LSDYFWFVDPLFGVVISLYIF).

It belongs to the cation diffusion facilitator (CDF) transporter (TC 2.A.4) family.

The protein localises to the cell membrane. In Rickettsia rickettsii (strain Sheila Smith), this protein is Protein p34 (p34).